Reading from the N-terminus, the 175-residue chain is Ribosome maturation factor RimM (175 aa).

The 78-residue stretch at 98–175 folds into the PRC barrel domain; it reads EGEYYWYQLE…EMRVDWDADF (78 aa).

Belongs to the RimM family. Binds ribosomal protein uS19.

It is found in the cytoplasm. Functionally, an accessory protein needed during the final step in the assembly of 30S ribosomal subunit, possibly for assembly of the head region. Essential for efficient processing of 16S rRNA. May be needed both before and after RbfA during the maturation of 16S rRNA. It has affinity for free ribosomal 30S subunits but not for 70S ribosomes. This chain is Ribosome maturation factor RimM, found in Pseudomonas paraeruginosa (strain DSM 24068 / PA7) (Pseudomonas aeruginosa (strain PA7)).